Consider the following 185-residue polypeptide: MDRDEIKSAIEAILFAWSDPLSIKDLSEVLDIGTKEIEGVLAEMINEFNYSKRGIQIIKMNDYYQLSTRPEHYEYLQKLFAPKQNRGITQAALETLAIIAYKQPITKTEIEEIRGVKCDKAISTLLEKELIEEQGRLEKTGRPIIYGTTINFLKVFSISSLDNLPNVSDFNISVDSDILKDIYEK.

It belongs to the ScpB family. As to quaternary structure, homodimer. Homodimerization may be required to stabilize the binding of ScpA to the Smc head domains. Component of a cohesin-like complex composed of ScpA, ScpB and the Smc homodimer, in which ScpA and ScpB bind to the head domain of Smc. The presence of the three proteins is required for the association of the complex with DNA.

Its subcellular location is the cytoplasm. Participates in chromosomal partition during cell division. May act via the formation of a condensin-like complex containing Smc and ScpA that pull DNA away from mid-cell into both cell halves. The sequence is that of Segregation and condensation protein B from Alkaliphilus oremlandii (strain OhILAs) (Clostridium oremlandii (strain OhILAs)).